A 117-amino-acid chain; its full sequence is Galanin-like peptide (117 aa).

An N-terminal signal peptide occupies residues 1–23 (MACSVHLVLFLTILLSLAETPES). Residues 86–117 (TMGETFVKANTGDMHILDKNVPKEEATLDSES) constitute a propeptide that is removed on maturation.

This sequence belongs to the galanin family. Isoform 2 is found in brain, thymus and skin. Isoform 2 is found in the skin, in pericytes covering microvascular arterioles and venules on their abluminal surfaces. In larger vessels, isoform 2 is expressed in layers of smooth muscle cells. Isoform 2 is not detected in endothelial cells.

It is found in the secreted. Its function is as follows. Hypothalamic neuropeptide which binds to the G-protein-coupled galanin receptors (GALR1, GALR2 and GALR3). Involved in a large number of putative physiological functions in CNS homeostatic processes, including the regulation of gonadotropin-releasing hormone secretion. In terms of biological role, exhibits antimicrobial activity against Gram-negative bacterias, inducing bacterial membrane blebbing. Exhibits potent and dose-dependent vasoconstrictor and anti-edema activity in the cutaneous microvasculature, a physiologic effects which does not appear to be mediated via GALR1 or GALR2. This is Galanin-like peptide (Galp) from Mus musculus (Mouse).